We begin with the raw amino-acid sequence, 118 residues long: Holo-[acyl-carrier-protein] synthase (118 aa).

2 residues coordinate Mg(2+): aspartate 8 and glutamate 58.

This sequence belongs to the P-Pant transferase superfamily. AcpS family. Mg(2+) serves as cofactor.

It is found in the cytoplasm. It carries out the reaction apo-[ACP] + CoA = holo-[ACP] + adenosine 3',5'-bisphosphate + H(+). Functionally, transfers the 4'-phosphopantetheine moiety from coenzyme A to a Ser of acyl-carrier-protein. The protein is Holo-[acyl-carrier-protein] synthase of Listeria monocytogenes serotype 4b (strain CLIP80459).